We begin with the raw amino-acid sequence, 135 residues long: Lymphocyte antigen 6B (135 aa).

Residues 1–26 (MNRSCAMKSCVLILLLALLCAERAQG) form the signal peptide. One can recognise a UPAR/Ly6 domain in the interval 27–119 (LNCYNCTMIP…PTGGSTWTMA (93 aa)). Disulfide bonds link C29/C54, C32/C41, C47/C75, C79/C99, and C100/C105. G113 is lipidated: GPI-anchor amidated glycine. The propeptide at 114-135 (STWTMAGVLLFILGSVLLQTLL) is removed in mature form.

The protein localises to the cell membrane. The polypeptide is Lymphocyte antigen 6B (Ly6b) (Rattus norvegicus (Rat)).